Here is a 135-residue protein sequence, read N- to C-terminus: Small ribosomal subunit protein uS12 (135 aa).

Asp89 bears the 3-methylthioaspartic acid mark. The disordered stretch occupies residues 106-135; sequence GVANRRQSRSKYGAKRPKAGAAQATKGGKK. The segment covering 111–123 has biased composition (basic residues); that stretch reads RQSRSKYGAKRPK. The span at 124–135 shows a compositional bias: low complexity; it reads AGAAQATKGGKK.

This sequence belongs to the universal ribosomal protein uS12 family. As to quaternary structure, part of the 30S ribosomal subunit. Contacts proteins S8 and S17. May interact with IF1 in the 30S initiation complex.

With S4 and S5 plays an important role in translational accuracy. In terms of biological role, interacts with and stabilizes bases of the 16S rRNA that are involved in tRNA selection in the A site and with the mRNA backbone. Located at the interface of the 30S and 50S subunits, it traverses the body of the 30S subunit contacting proteins on the other side and probably holding the rRNA structure together. The combined cluster of proteins S8, S12 and S17 appears to hold together the shoulder and platform of the 30S subunit. This is Small ribosomal subunit protein uS12 from Hydrogenobaculum sp. (strain Y04AAS1).